The primary structure comprises 130 residues: Small ribosomal subunit protein uS8 (130 aa).

It belongs to the universal ribosomal protein uS8 family. As to quaternary structure, part of the 30S ribosomal subunit. Contacts proteins S5 and S12.

One of the primary rRNA binding proteins, it binds directly to 16S rRNA central domain where it helps coordinate assembly of the platform of the 30S subunit. The sequence is that of Small ribosomal subunit protein uS8 from Proteus mirabilis (strain HI4320).